A 316-amino-acid chain; its full sequence is uncharacterized protein (316 aa).

The protein belongs to the chlamydial CPn_0441/CT_007/TC_0275 family.

This is an uncharacterized protein from Chlamydia pneumoniae (Chlamydophila pneumoniae).